Consider the following 235-residue polypeptide: Pathogen-related protein (235 aa).

This chain is Pathogen-related protein, found in Hordeum vulgare (Barley).